A 247-amino-acid chain; its full sequence is Orotidine 5'-phosphate decarboxylase (247 aa).

Residues Asp22, Lys44, 71-80 (DLKFHDIPNT), Thr131, Arg192, Gln201, Gly221, and Arg222 contribute to the substrate site. Catalysis depends on Lys73, which acts as the Proton donor.

It belongs to the OMP decarboxylase family. Type 1 subfamily. In terms of assembly, homodimer.

It carries out the reaction orotidine 5'-phosphate + H(+) = UMP + CO2. It participates in pyrimidine metabolism; UMP biosynthesis via de novo pathway; UMP from orotate: step 2/2. Catalyzes the decarboxylation of orotidine 5'-monophosphate (OMP) to uridine 5'-monophosphate (UMP). In Pectobacterium carotovorum subsp. carotovorum (strain PC1), this protein is Orotidine 5'-phosphate decarboxylase.